Reading from the N-terminus, the 300-residue chain is Integrin-binding sialoprotein (300 aa).

The disordered stretch occupies residues 41 to 258 (RFPVQSSSDS…YEQTGAHEYD (218 aa)). 6 positions are modified to phosphoserine: Ser-46, Ser-51, Ser-59, Ser-60, Ser-82, and Ser-90. A compositionally biased stretch (low complexity) spans 46–58 (SSSDSSEENGNGD). Positions 59–92 (SSEEEEEEEENSNEEENNEENEDSDGNEDEDSEA) are enriched in acidic residues. Positions 93-102 (ENITLSTTTL) are enriched in polar residues. N-linked (GlcNAc...) asparagine glycosylation occurs at Asn-94. Residues 125–136 (KAGDIGKKSAKE) show a composition bias toward basic and acidic residues. Residues 137–160 (EESDEDEEEEEENEENEAEVDDNE) are compositionally biased toward acidic residues. Phosphoserine is present on Ser-139. Polar residues-rich tracts occupy residues 161–173 (QGTN…STEV), 193–202 (VTEAQGTTVA), and 229–243 (ISGT…TTTP). 2 N-linked (GlcNAc...) asparagine glycosylation sites follow: Asn-164 and Asn-169. A Phosphoserine modification is found at Ser-266. The Integrin-binding motif motif lies at 272–274 (RGD). Position 293 is a phosphoserine (Ser-293). A sulfotyrosine mark is found at Tyr-299 and Tyr-300.

In terms of assembly, monomer. Interacts with integrins; the interaction promotes cell adhesion.

The protein localises to the secreted. In terms of biological role, binds tightly to hydroxyapatite. Appears to form an integral part of the mineralized matrix. Probably important to cell-matrix interaction. Promotes adhesion and migration of various cells via the alpha-V/beta-3 integrin receptor (ITGAV:ITGB3). The protein is Integrin-binding sialoprotein (IBSP) of Sus scrofa (Pig).